The primary structure comprises 582 residues: Putative phospholipase B-like 2 (582 aa).

Residues 1–42 (MTRLIRSKKQFLIRSLHSVFYYLGSLLHSTFEMNVFIGLLLA) form the signal peptide. Residues asparagine 91, asparagine 141, asparagine 178, asparagine 224, and asparagine 318 are each glycosylated (N-linked (GlcNAc...) asparagine). Cysteine 139 and cysteine 146 are disulfide-bonded. The cysteines at positions 480 and 482 are disulfide-linked. An N-linked (GlcNAc...) asparagine glycan is attached at asparagine 502.

It belongs to the phospholipase B-like family.

The protein localises to the secreted. In terms of biological role, putative phospholipase. The polypeptide is Putative phospholipase B-like 2 (Caenorhabditis elegans).